Here is a 252-residue protein sequence, read N- to C-terminus: MLKTRIIPCLDVKDGRTVKGVNFVDLKDAGDPVALARAYDAAGADELCFLDITASHEGRGTLLETVSRTAEACFMPLTVGGGVRSVEDMVALLRAGADKVAINSAAVADPALVSACAAKAGRQCVVVAIDARAVGDSWEIFTHGGRKATGINAVEFAREAAKRGAGEILLTSMDRDGTKSGYDIPLLKAVSSAVTIPVIASGGAGSVEDFAPAVLEGGASAVLAASIFHFGEASLAEARAALAKAGAPVRTV.

Residues aspartate 11 and aspartate 130 contribute to the active site.

Belongs to the HisA/HisF family. Heterodimer of HisH and HisF.

The protein resides in the cytoplasm. The catalysed reaction is 5-[(5-phospho-1-deoxy-D-ribulos-1-ylimino)methylamino]-1-(5-phospho-beta-D-ribosyl)imidazole-4-carboxamide + L-glutamine = D-erythro-1-(imidazol-4-yl)glycerol 3-phosphate + 5-amino-1-(5-phospho-beta-D-ribosyl)imidazole-4-carboxamide + L-glutamate + H(+). Its pathway is amino-acid biosynthesis; L-histidine biosynthesis; L-histidine from 5-phospho-alpha-D-ribose 1-diphosphate: step 5/9. IGPS catalyzes the conversion of PRFAR and glutamine to IGP, AICAR and glutamate. The HisF subunit catalyzes the cyclization activity that produces IGP and AICAR from PRFAR using the ammonia provided by the HisH subunit. The polypeptide is Imidazole glycerol phosphate synthase subunit HisF (Hyphomonas neptunium (strain ATCC 15444)).